The primary structure comprises 79 residues: Hematopoietic cell signal transducer (79 aa).

The first 17 residues, 1–17, serve as a signal peptide directing secretion; the sequence is MDPPGYLLFLLLLPVAA. At 18-35 the chain is on the extracellular side; the sequence is SQTSAGSCSGCGTLSLPL. A helical transmembrane segment spans residues 36–56; that stretch reads LAGLVAADAVMSLLIVGVVFV. Over 57-79 the chain is Cytoplasmic; it reads CMRPHGRPAQEDGRVYINMPGRG. Tyrosine 72 is modified (phosphotyrosine). Positions 72-74 are GRB2 binding site; it reads YIN. A PIK3R1 binding site region spans residues 72–75; the sequence is YINM.

The protein belongs to the DAP10 family. In terms of assembly, homodimer; Disulfide-linked. Interacts with KLRK1 to form a stable complex, which results in surface expression of both proteins, whereas alone, it is minimally expressed. Interacts with PIK3R1 and GRB2. Interacts with CLEC5A. Forms an CLEC5A/TYROBP/HCST trimolecular complex depending almost solely on TYROBP. Heterohexamer composed of four subunits of HCST/DAP10 and two subunits of KLRK1. Interacts (via transmembrane domain) with KLRK1 isoform 1 (via transmembrane domain); the interaction is required for KLRK1 cell surface expression on naive NK cells and activated CD8(+) T-cells, but is dispensable on activated TYROBP-expressing NK cells. Interacts (via transmembrane domain) with KLRK1 isoform 2 (via transmembrane domain); the interaction is required for KLRK1 NK cell surface expression and induces NK cell-mediated cytotoxicity. Interacts with CD300H. Phosphorylated; PIK3R1 and GRB2 associate specifically with tyrosine-phosphorylated HCST. In terms of processing, O-glycosylated.

The protein localises to the membrane. In terms of biological role, transmembrane adapter protein which associates with KLRK1 to form an activation receptor KLRK1-HCST in lymphoid and myeloid cells; this receptor plays a major role in triggering cytotoxicity against target cells expressing cell surface ligands such as MHC class I chain-related MICA and MICB, and UL16-binding proteins (ULBPs); these ligands are up-regulated by stress conditions and pathological state such as viral infection and tumor transformation. Functions as a docking site for PI3-kinase PIK3R1 and GRB2. Interaction of ULBPs with KLRK1-HCST triggers calcium mobilization and activation of the PIK3R1, MAP2K/ERK, and JAK2/STAT5 signaling pathways. Both PIK3R1 and GRB2 are required for full KLRK1-HCST-mediated activation and ultimate killing of target cells. In NK cells, KLRK1-HCST signaling directly induces cytotoxicity and enhances cytokine production initiated via DAP12/TYROBP-associated receptors. In T-cells, it provides primarily costimulation for TCR-induced signals. KLRK1-HCST receptor plays a role in immune surveillance against tumors and is required for cytolysis of tumors cells; indeed, melanoma cells that do not express KLRK1 ligands escape from immune surveillance mediated by NK cells. This chain is Hematopoietic cell signal transducer (Hcst), found in Mus musculus (Mouse).